The following is a 334-amino-acid chain: MDDRMVDQSMHDEESSFELSLRPTKLRQYIGQSTIKSNLEVFIKAAKMRQEPLDHVLLFGPPGLGKTTLSNIIANEMEVNIRIISGPSIERPGDLAAILSSLQPGDVLFIDEIHRLSSVVEEVLYPAMEDFFLDIVIGKGEEARSIRIDLPPFTLIGATTRAGSLTAPLRDRFGVHLRLEYYQELELKEIIVRTAEVLGTSIDDESAIELAKRSRGTPRVANRLLKRVRDFQQVNEDELISIATTRASLQLLQVDDEGLDYIDHKMMNCILEQYKGGPVGLDTIAVSIGEERVTIEDVYEPFLIQKGFIERTPRGRKATPYAFEHFSKKNGKKE.

Residues 1-182 (MDDRMVDQSM…FGVHLRLEYY (182 aa)) form a large ATPase domain (RuvB-L) region. ATP contacts are provided by residues Leu21, Arg22, Gly63, Lys66, Thr67, Thr68, 129–131 (EDF), Arg172, Tyr182, and Arg219. A Mg(2+)-binding site is contributed by Thr67. The interval 183-253 (QELELKEIIV…TTRASLQLLQ (71 aa)) is small ATPAse domain (RuvB-S). Residues 256–334 (DEGLDYIDHK…HFSKKNGKKE (79 aa)) are head domain (RuvB-H). 3 residues coordinate DNA: Arg292, Arg311, and Arg316.

This sequence belongs to the RuvB family. As to quaternary structure, homohexamer. Forms an RuvA(8)-RuvB(12)-Holliday junction (HJ) complex. HJ DNA is sandwiched between 2 RuvA tetramers; dsDNA enters through RuvA and exits via RuvB. An RuvB hexamer assembles on each DNA strand where it exits the tetramer. Each RuvB hexamer is contacted by two RuvA subunits (via domain III) on 2 adjacent RuvB subunits; this complex drives branch migration. In the full resolvosome a probable DNA-RuvA(4)-RuvB(12)-RuvC(2) complex forms which resolves the HJ.

Its subcellular location is the cytoplasm. It carries out the reaction ATP + H2O = ADP + phosphate + H(+). Functionally, the RuvA-RuvB-RuvC complex processes Holliday junction (HJ) DNA during genetic recombination and DNA repair, while the RuvA-RuvB complex plays an important role in the rescue of blocked DNA replication forks via replication fork reversal (RFR). RuvA specifically binds to HJ cruciform DNA, conferring on it an open structure. The RuvB hexamer acts as an ATP-dependent pump, pulling dsDNA into and through the RuvAB complex. RuvB forms 2 homohexamers on either side of HJ DNA bound by 1 or 2 RuvA tetramers; 4 subunits per hexamer contact DNA at a time. Coordinated motions by a converter formed by DNA-disengaged RuvB subunits stimulates ATP hydrolysis and nucleotide exchange. Immobilization of the converter enables RuvB to convert the ATP-contained energy into a lever motion, pulling 2 nucleotides of DNA out of the RuvA tetramer per ATP hydrolyzed, thus driving DNA branch migration. The RuvB motors rotate together with the DNA substrate, which together with the progressing nucleotide cycle form the mechanistic basis for DNA recombination by continuous HJ branch migration. Branch migration allows RuvC to scan DNA until it finds its consensus sequence, where it cleaves and resolves cruciform DNA. This chain is Holliday junction branch migration complex subunit RuvB, found in Staphylococcus saprophyticus subsp. saprophyticus (strain ATCC 15305 / DSM 20229 / NCIMB 8711 / NCTC 7292 / S-41).